We begin with the raw amino-acid sequence, 300 residues long: Free fatty acid receptor 1 (300 aa).

Over 1–8 (MDLPPQLS) the chain is Extracellular. Residues 9 to 31 (FALYVAAFALGFPLNVLAIRGAR) traverse the membrane as a helical segment. Over 32-41 (AHARRRLTPS) the chain is Cytoplasmic. A helical transmembrane segment spans residues 42–64 (LVYALNLGCSDLLLTVSLPLKAV). Residues 65–79 (EALASGAWPLPASLC) are Extracellular-facing. Residues C79 and C170 are joined by a disulfide bond. Residues 80-101 (PVFGVAHFAPLYAGGGFLAALS) traverse the membrane as a helical segment. Over 102–121 (AGRYLGAAFPLGYQAFRRPC) the chain is Cytoplasmic. A helical membrane pass occupies residues 122–142 (YSWGVCAAIWALVLCHLGLVF). Over 143 to 178 (VLEAPGGWLDHSNTSLGINTPVNGSPVCLEAWDPAS) the chain is Extracellular. N-linked (GlcNAc...) asparagine glycosylation is present at N155. A helical transmembrane segment spans residues 179–200 (AGPARFSLSLLLFFLPLAITAF). Over 201-223 (CYVGCLRALAHSGLTHRRKLRAA) the chain is Cytoplasmic. A helical transmembrane segment spans residues 224–248 (WVAGGALLTLLLCVGPYNASNVASF). The Extracellular segment spans residues 249-256 (LNPNLGGS). Residues 257 to 279 (WRKLGLITGAWSVVLNPLVTGYL) form a helical membrane-spanning segment. At 280-300 (GRGPGLKTVCAARTQGSTSQK) the chain is on the cytoplasmic side.

This sequence belongs to the G-protein coupled receptor 1 family.

It localises to the cell membrane. G-protein coupled receptor for medium and long chain saturated and unsaturated fatty acids that plays an important role in glucose homeostasis. Fatty acid binding increases glucose-stimulated insulin secretion, and may also enhance the secretion of glucagon-like peptide 1 (GLP-1). May also play a role in bone homeostasis; receptor signaling activates pathways that inhibit osteoclast differentiation. Ligand binding leads to a conformation change that triggers signaling via G-proteins that activate phospholipase C, leading to an increase of the intracellular calcium concentration. Seems to act through a G(q) and G(i)-mediated pathway. Mediates the anti-inflammatory effects of omega-3 polyunsaturated fatty acids (PUFAs) via inhibition of NLRP3 inflammasome activation. This Macaca fascicularis (Crab-eating macaque) protein is Free fatty acid receptor 1 (FFAR1).